Here is a 90-residue protein sequence, read N- to C-terminus: DNA-binding protein HU-alpha (90 aa).

Belongs to the bacterial histone-like protein family. Heterodimer of an alpha and a beta chain.

Functionally, histone-like DNA-binding protein which is capable of wrapping DNA to stabilize it, and thus to prevent its denaturation under extreme environmental conditions. This chain is DNA-binding protein HU-alpha (hupA), found in Aeromonas hydrophila.